Consider the following 257-residue polypeptide: Adenylate kinase (257 aa).

51–56 (GAGKGT) contributes to the ATP binding site. Residues 71–100 (ATGDMLRSQVAKKTELGKEAKKIMDQGGLV) are NMP. Residues Thr-72, Arg-77, 98 to 100 (GLV), 127 to 130 (GFPR), and Gln-134 contribute to the AMP site. The LID stretch occupies residues 168 to 205 (GRLVHPASGRSYHKIFNPPKQEMKDDITGEPLIQRSDD). Residues Arg-169 and 178–179 (SY) each bind ATP. Residues Arg-202 and Arg-213 each contribute to the AMP site. Gln-241 is an ATP binding site.

It belongs to the adenylate kinase family. AK2 subfamily. Monomer.

The protein resides in the cytoplasm. Its subcellular location is the cytosol. It is found in the mitochondrion intermembrane space. The catalysed reaction is AMP + ATP = 2 ADP. In terms of biological role, catalyzes the reversible transfer of the terminal phosphate group between ATP and AMP. Plays an important role in cellular energy homeostasis and in adenine nucleotide metabolism. Adenylate kinase activity is critical for regulation of the phosphate utilization and the AMP de novo biosynthesis pathways. The chain is Adenylate kinase (adk1) from Aspergillus terreus (strain NIH 2624 / FGSC A1156).